A 134-amino-acid polypeptide reads, in one-letter code: VDILEEKTKDQDLEIELYKYMGPLKEQSKSTSAASTSDELSGSEGPSTESTSTGNQGEDKTTDNTYKEMEELEEAEGTSNLKKGLEFYKSSLKLDQLDKEKPKKKKSKRKKKRDSSSDRILLEESKTFTSENEL.

Disordered regions lie at residues 21-82 (MGPL…SNLK) and 96-134 (QLDK…ENEL). Polar residues predominate over residues 29 to 38 (KSTSAASTSD). Low complexity predominate over residues 39–54 (ELSGSEGPSTESTSTG). Residues 57-69 (GEDKTTDNTYKEM) are compositionally biased toward basic and acidic residues. The span at 102 to 113 (PKKKKSKRKKKR) shows a compositional bias: basic residues. Basic and acidic residues predominate over residues 114–126 (DSSSDRILLEESK).

This is Rhoptry antigen protein from Plasmodium falciparum.